The sequence spans 325 residues: MAFIGVDHGTTAMRFALIEGEKVLTFELGRSEAAAMSEKEILESIEKEFEVKVKDIDLIALTYSMGDGFSEIKDVKKIEGRGLQSTEGAGKKTGGGTRVFDAVKNSGIPAIAIPGLHTRSKVDPRMKVFSHLTSPEKLGIAYHIRCMGYKDFVVSDISSNTVTLAVASGKVIGAIDACIFAPGVHHGPLDLEAIRNVDDGLRTANQAFMEAGALKMTPYKDRGELLNAAENGEEPALLALDTISLFAAMEIVSMQLLLKEYGVTGAAFLAGSVGEVEYVQKKISRHLGQECLSLGKWHAAIGCAGIARDVFAGENHILGIDVDYP.

This sequence belongs to the UPF0285 family.

The protein is UPF0285 protein MM_0679 of Methanosarcina mazei (strain ATCC BAA-159 / DSM 3647 / Goe1 / Go1 / JCM 11833 / OCM 88) (Methanosarcina frisia).